The primary structure comprises 210 residues: Redox-sensing transcriptional repressor Rex (210 aa).

Residues 16 to 55 (IYMRTLQELLEDDVDVISSERLAKQCGVNPAQIRKDLAYF) constitute a DNA-binding region (H-T-H motif). 90–95 (GLGNLG) lines the NAD(+) pocket.

It belongs to the transcriptional regulatory Rex family. In terms of assembly, homodimer.

It localises to the cytoplasm. Modulates transcription in response to changes in cellular NADH/NAD(+) redox state. The polypeptide is Redox-sensing transcriptional repressor Rex (Syntrophobacter fumaroxidans (strain DSM 10017 / MPOB)).